The chain runs to 473 residues: MSNIYIQEPPTNGKVLLKTTAGDIDIELWSKEAPKACRNFIQLCLEAYYDNTIFHRVVPGFIVQGGDPTGTGTGGESIYGVPFKDEFHSRLRFNRRGLVAMANAGPHDNGSQFFFTLGRADELNNKHTIFGKVTGDTVYNMLRLTEVDIDDEERPRNSHKIRSCEVLFNPFDDIIPREIKKPKKEKPEEEVKKLKPKGTKNFSLLSFGEEAEEEEEEVNRVSQSMKGKSKSSHDLLKDDPHLSSVPAVESERGDAAEDSDDDGEYEGAEHDEYVDGDEKNQMRERIAKKLKKDTSENVKRAGEGEVEKKPVSRSEELRKEARQLKRELLAAKQKKAENSAIQAEKRSEEEEAAPDGAVAEYRREKQKYEALRKQQAKTGTSREDQTLALLNQFKSKLTQAIAETPENDISETEVEDDEGWMSHVLQFEDKSRKVKDASMQDSDTFEIYDPRNPVNKRRREESKKLMREKKERR.

Ser-2 bears the N-acetylserine mark. A PPIase cyclophilin-type domain is found at 11–166 (TNGKVLLKTT…NSHKIRSCEV (156 aa)). The segment covering 178–193 (EIKKPKKEKPEEEVKK) has biased composition (basic and acidic residues). Disordered regions lie at residues 178 to 197 (EIKKPKKEKPEEEVKKLKPK), 203 to 383 (SLLS…TSRE), and 401 to 473 (IAET…KERR). A coiled-coil region spans residues 206 to 230 (SFGEEAEEEEEEVNRVSQSMKGKSK). Positions 231-241 (SSHDLLKDDPH) are enriched in basic and acidic residues. Residues 252-254 (RGD) carry the Cell attachment site motif. Residues 256–266 (AEDSDDDGEYE) are compositionally biased toward acidic residues. Composition is skewed to basic and acidic residues over residues 267–348 (GAEH…KRSE) and 360–372 (EYRREKQKYEALR). Positions 311 to 378 (VSRSEELRKE…EALRKQQAKT (68 aa)) form a coiled coil. Ser-347 is subject to Phosphoserine. A compositionally biased stretch (acidic residues) spans 405 to 419 (PENDISETEVEDDEG). Composition is skewed to basic and acidic residues over residues 426 to 438 (QFEDKSRKVKDAS) and 458 to 473 (RREESKKLMREKKERR).

The protein belongs to the cyclophilin-type PPIase family. As to quaternary structure, part of the activated spliceosome B/catalytic step 1 spliceosome, one of the forms of the spliceosome which has a well-formed active site but still cannot catalyze the branching reaction and is composed at least of 52 proteins, the U2, U5 and U6 snRNAs and the pre-mRNA. Recruited during early steps of activated spliceosome B maturation, it is probably one of the first proteins released from this complex as he matures to the spliceosome C complex. Component of the minor spliceosome, which splices U12-type introns.

The protein resides in the nucleus. Functionally, as part of the spliceosome, plays a role in pre-mRNA splicing. Probable inactive PPIase with no peptidyl-prolyl cis-trans isomerase activity. As a component of the minor spliceosome, involved in the splicing of U12-type introns in pre-mRNAs. The polypeptide is Spliceosome-associated protein CWC27 homolog (Bos taurus (Bovine)).